Consider the following 255-residue polypeptide: Tabinhibitin 1 (255 aa).

The signal sequence occupies residues 1–23 (MTSILVSRFLIAALVLQYATSDA). An SCP domain is found at 67-211 (LSKINDVRDH…KARALLTCNF (145 aa)).

It belongs to the CRISP family. As to expression, expressed in salivary glands.

The protein resides in the secreted. Functionally, inhibits platelet aggregation induced by all agonists tested. May act by competing with fibrinogen for binding to glycoprotein IIb/IIIa (ITGA2B/ITGB3). The polypeptide is Tabinhibitin 1 (Tabanus yao (Horsefly)).